Here is a 101-residue protein sequence, read N- to C-terminus: Integration host factor subunit alpha (101 aa).

This sequence belongs to the bacterial histone-like protein family. As to quaternary structure, heterodimer of an alpha and a beta chain.

This protein is one of the two subunits of integration host factor, a specific DNA-binding protein that functions in genetic recombination as well as in transcriptional and translational control. This Halorhodospira halophila (strain DSM 244 / SL1) (Ectothiorhodospira halophila (strain DSM 244 / SL1)) protein is Integration host factor subunit alpha.